The chain runs to 1408 residues: Palladin (1408 aa).

The interval 69-229 (SKSPISLCET…SASQSPTADQ (161 aa)) is disordered. Polar residues-rich tracts occupy residues 149–169 (PNPS…QSQL) and 193–229 (RSPN…TADQ). Position 194 is a phosphoserine (Ser194). Ig-like C2-type domains lie at 278-367 (PRFI…AEVF) and 448-546 (PVFT…LVIT). 2 disulfides stabilise this stretch: Cys299/Cys351 and Cys469/Cys528. An interaction with VASP region spans residues 569–573 (FPPPP). Disordered stretches follow at residues 631–660 (NGKA…LAKP) and 687–727 (PPGV…VPSE). Ser639 carries the post-translational modification Phosphoserine. Thr642 is modified (phosphothreonine). At Ser648 the chain carries Phosphoserine. Residues 653-683 (PPPLLAKPKLDPLKLQQLQNQVRLEQEACAW) form an interaction with LASP1 region. The interval 683–713 (WPPAPPGVPCNSSSSGSSAPPSPPFPPPPPA) is interaction with SORBS2, SPIN90 and SRC. Over residues 691–701 (PCNSSSSGSSA) the composition is skewed to low complexity. Ser700, Ser704, and Ser744 each carry phosphoserine. Over residues 702-714 (PPSPPFPPPPPAF) the composition is skewed to pro residues. Disordered stretches follow at residues 758 to 854 (NLGP…RFGP), 882 to 904 (KGVT…SDEE), and 960 to 981 (ETAA…LDGQ). Positions 765–779 (LPTPTSSPSSSSLPS) are enriched in low complexity. Composition is skewed to pro residues over residues 780 to 797 (PLSP…PPFV), 807 to 818 (SPSPPPPPPPVF), and 828 to 840 (DVFP…PPLP). An interaction with EPS8 region spans residues 782–842 (SPTPRPFGRA…PPPPPPLPSS (61 aa)). The tract at residues 807-842 (SPSPPPPPPPVFSPSAAYPVPDVFPLPPPPPPLPSS) is interaction with SORBS2, SPIN90, SRC and PFN1. Residues 830–834 (FPLPP) form an interaction with VASP region. Position 901 is a phosphoserine (Ser901). A phosphoserine mark is found at Ser1004 and Ser1009. In terms of domain architecture, Ig-like C2-type 3 spans 1026–1110 (PFFEMKLKHY…MAANPQGRVS (85 aa)). Residues 1121–1150 (NQRGRSPRSPSGHPHARRPRSRSRDSGDEN) form a disordered region. The span at 1123-1133 (RGRSPRSPSGH) shows a compositional bias: low complexity. Phosphoserine is present on residues Ser1126, Ser1129, Ser1131, and Ser1141. Ser1143 carries the phosphoserine; by PKB/AKT1 modification. Ser1146 carries the phosphoserine modification. Ig-like C2-type domains are found at residues 1160 to 1251 (PHFL…LVVA) and 1259 to 1349 (PVFM…ARLD). Interaction with EZR stretches follow at residues 1162–1251 (FLQA…LVVA) and 1261–1351 (FMEK…LDVY). Cys1181 and Cys1233 form a disulfide bridge. Ser1377 is modified (phosphoserine).

Belongs to the myotilin/palladin family. As to quaternary structure, interacts with EPS8. Interacts with LASP1. Interacts with VASP. Interacts with ACTN. Interacts with SORBS2. Interacts with PFN1. Interacts with LPP. Interacts with SPIN90. Interacts with SRC. Interacts with EZR. Interacts with RAI14. Phosphorylated predominantly on serines and, to a lesser extent, on tyrosines. Phosphorylation at Ser-1143 by PKB/AKT1 modulates cytoskeletal organization and cell motility. Detected in both muscle and non-muscle tissues and cells (at protein level). Isoform 3 is widely expressed, isoform 4 is particularly abundant in tissues rich in smooth muscle and in the cardiac muscle and isoform 1 is detected in heart.

It localises to the cytoplasm. Its subcellular location is the cytoskeleton. The protein localises to the cell junction. It is found in the focal adhesion. The protein resides in the myofibril. It localises to the sarcomere. Its subcellular location is the z line. The protein localises to the cell projection. It is found in the ruffle. The protein resides in the podosome. It localises to the lamellipodium. Its subcellular location is the axon. The protein localises to the growth cone. Functionally, cytoskeletal protein required for organization of normal actin cytoskeleton. Roles in establishing cell morphology, motility, cell adhesion and cell-extracellular matrix interactions in a variety of cell types. May function as a scaffolding molecule with the potential to influence both actin polymerization and the assembly of existing actin filaments into higher-order arrays. Binds to proteins that bind to either monomeric or filamentous actin. Localizes at sites where active actin remodeling takes place, such as lamellipodia and membrane ruffles. Different isoforms may have functional differences. Involved in the control of morphological and cytoskeletal changes associated with dendritic cell maturation. Involved in targeting ACTN to specific subcellular locations. May be required for the initiation of neural tube closure. The chain is Palladin (Palld) from Mus musculus (Mouse).